Reading from the N-terminus, the 369-residue chain is Putative F-box/kelch-repeat protein At4g39760 (369 aa).

The 47-residue stretch at 14-60 folds into the F-box domain; that stretch reads SLSFSSLPHEIVVSCLARVSGSYYPKLCLVSKQFRSIILSNEIYKAR. Kelch repeat units follow at residues 131–177, 178–224, and 228–274; these read ETYI…GQYP, NIYV…KMKM, and NVYV…KNCW.

The sequence is that of Putative F-box/kelch-repeat protein At4g39760 from Arabidopsis thaliana (Mouse-ear cress).